Reading from the N-terminus, the 287-residue chain is AA9 family lytic polysaccharide monooxygenase D (287 aa).

The signal sequence occupies residues 1 to 17; it reads MKLSLLAAAAIAPMVSA. Position 18 (His-18) interacts with Cu(2+). Cys-67 and Cys-189 are oxidised to a cystine. Position 176 (His-176) interacts with O2. Tyr-186 contacts Cu(2+). Asn-220 and Asn-250 each carry an N-linked (GlcNAc...) asparagine glycan. The disordered stretch occupies residues 239–287; it reads TGGSGSSTGSYNESNAEDSNEYPYQKESGTCQSNFYRREHARDFSHRRA. Basic and acidic residues predominate over residues 274–287; that stretch reads YRREHARDFSHRRA.

It belongs to the polysaccharide monooxygenase AA9 family. Cu(2+) is required as a cofactor.

It localises to the secreted. It carries out the reaction [(1-&gt;4)-beta-D-glucosyl]n+m + reduced acceptor + O2 = 4-dehydro-beta-D-glucosyl-[(1-&gt;4)-beta-D-glucosyl]n-1 + [(1-&gt;4)-beta-D-glucosyl]m + acceptor + H2O.. Functionally, lytic polysaccharide monooxygenase (LPMO) that depolymerizes crystalline and amorphous polysaccharides via the oxidation of scissile alpha- or beta-(1-4)-glycosidic bonds, yielding C1 oxidation products. Catalysis by LPMOs requires the reduction of the active-site copper from Cu(II) to Cu(I) by a reducing agent and H(2)O(2) or O(2) as a cosubstrate. Active on celluloseas as well as on the hemicellulose xyloglucan. Shows synergy with other hydrolases in degrading sorghum stover. In Emericella nidulans (strain FGSC A4 / ATCC 38163 / CBS 112.46 / NRRL 194 / M139) (Aspergillus nidulans), this protein is AA9 family lytic polysaccharide monooxygenase D.